Reading from the N-terminus, the 192-residue chain is EF-hand protein 5 (192 aa).

The segment at 1 to 36 (MKDKAPVSSQQDHFSRGGAVGGKPISDVRGTSRPFY) is disordered. 4 consecutive EF-hand domains span residues 46–80 (AELAEGFRVLSNGQKTISIPMKEVSALMASVGLHL), 81–118 (SDEEFHEVMRVFGQGEQTNTEELSFKDFLSLMMCEVDD), 119–154 (TMLEEMRGAFLHYDKQKTGFVTKKQFTELFATGGEC), and 155–190 (STPEEVEELLTIAEQDETDDKIDYNRFINELIHRLN). Residues Thr100, Glu102, Asp107, Asp132, and Thr136 each coordinate Ca(2+).

This chain is EF-hand protein 5, found in Trypanosoma brucei brucei.